Consider the following 205-residue polypeptide: Putative 3-methyladenine DNA glycosylase (205 aa).

This sequence belongs to the DNA glycosylase MPG family.

This chain is Putative 3-methyladenine DNA glycosylase, found in Bacillus cereus (strain ZK / E33L).